We begin with the raw amino-acid sequence, 333 residues long: Isoaspartyl peptidase/L-asparaginase (333 aa).

Residue Thr191 is the Nucleophile of the active site. Residues Arg219–Asp222 and Thr242–Gly245 each bind substrate.

Belongs to the Ntn-hydrolase family. As to quaternary structure, heterodimer of an alpha and beta chain produced by autocleavage. This heterodimer may then dimerize in turn, giving rise to a heterotetramer. In terms of processing, cleaved into an alpha and beta chain by autocatalysis; this activates the enzyme. The N-terminal residue of the beta subunit is responsible for the nucleophile hydrolase activity. Present in testis, brain, liver, kidney, heart and skeletal muscle. In brain, specifically present in the astrocytic lineage. Present in sperm (at protein level).

It is found in the cytoplasm. It carries out the reaction L-asparagine + H2O = L-aspartate + NH4(+). It catalyses the reaction Cleavage of a beta-linked Asp residue from the N-terminus of a polypeptide.. Its function is as follows. Has both L-asparaginase and beta-aspartyl peptidase activity. Is highly active with L-Asp beta-methyl ester. Besides, has catalytic activity toward beta-aspartyl dipeptides and their methyl esters, including beta-L-Asp-L-Phe, beta-L-Asp-L-Phe methyl ester (aspartame), beta-L-Asp-L-Ala, beta-L-Asp-L-Leu and beta-L-Asp-L-Lys. Does not have aspartylglucosaminidase activity and is inactive toward GlcNAc-L-Asn. Likewise, has no activity toward glutamine. May be involved in the production of L-aspartate, which can act as an excitatory neurotransmitter in some brain regions. In Rattus norvegicus (Rat), this protein is Isoaspartyl peptidase/L-asparaginase (Asrgl1).